The following is a 211-amino-acid chain: UPF0056 membrane protein BUsg_257 (211 aa).

6 helical membrane-spanning segments follow: residues 14 to 34, 54 to 74, 76 to 96, 116 to 136, 144 to 164, and 185 to 205; these read FFVS…FTTM, AFII…AFGI, INSF…SMIS, VVPL…TIVW, SDFL…WLCF, and IMGL…IKSI.

Belongs to the UPF0056 (MarC) family.

Its subcellular location is the cell membrane. The sequence is that of UPF0056 membrane protein BUsg_257 from Buchnera aphidicola subsp. Schizaphis graminum (strain Sg).